The chain runs to 154 residues: Methylglyoxal synthase (154 aa).

The region spanning 1–154 (MELTTRTIAA…RYMQQRLDLK (154 aa)) is the MGS-like domain. Substrate contacts are provided by residues H19, K23, 45–48 (TGTT), and 65–66 (SG). The active-site Proton donor/acceptor is D71. Residue H98 participates in substrate binding.

This sequence belongs to the methylglyoxal synthase family.

It carries out the reaction dihydroxyacetone phosphate = methylglyoxal + phosphate. Functionally, catalyzes the formation of methylglyoxal from dihydroxyacetone phosphate. This is Methylglyoxal synthase from Yersinia pseudotuberculosis serotype O:1b (strain IP 31758).